Consider the following 35-residue polypeptide: MSDIN-like toxin proprotein 1 (35 aa).

A propeptide spanning residues 1-10 (MSDINATRLP) is cleaved from the precursor. The cyclopeptide (Ile-Pro) cross-link spans 11–20 (IIIVLGLIIP). Residues 21–35 (LCVSDIEMILTRGER) constitute a propeptide that is removed on maturation.

Belongs to the MSDIN fungal toxin family. Processed by the macrocyclase-peptidase enzyme POPB to yield a toxic cyclic decapeptide. POPB first removes 10 residues from the N-terminus. Conformational trapping of the remaining peptide forces the enzyme to release this intermediate rather than proceed to macrocyclization. The enzyme rebinds the remaining peptide in a different conformation and catalyzes macrocyclization of the N-terminal 10 residues.

In terms of biological role, probable toxin that belongs to the MSDIN-like toxin family responsible for a large number of food poisoning cases and deaths. The chain is MSDIN-like toxin proprotein 1 from Amanita rimosa.